We begin with the raw amino-acid sequence, 330 residues long: Anthranilate phosphoribosyltransferase (330 aa).

5-phospho-alpha-D-ribose 1-diphosphate is bound by residues glycine 79, glycine 82–aspartate 83, threonine 87, asparagine 89–threonine 92, lysine 107–serine 115, and serine 119. Glycine 79 contacts anthranilate. Position 91 (serine 91) interacts with Mg(2+). Residue asparagine 110 coordinates anthranilate. Residue arginine 165 participates in anthranilate binding. Positions 223 and 224 each coordinate Mg(2+).

This sequence belongs to the anthranilate phosphoribosyltransferase family. Homodimer. It depends on Mg(2+) as a cofactor.

It carries out the reaction N-(5-phospho-beta-D-ribosyl)anthranilate + diphosphate = 5-phospho-alpha-D-ribose 1-diphosphate + anthranilate. The protein operates within amino-acid biosynthesis; L-tryptophan biosynthesis; L-tryptophan from chorismate: step 2/5. Its function is as follows. Catalyzes the transfer of the phosphoribosyl group of 5-phosphorylribose-1-pyrophosphate (PRPP) to anthranilate to yield N-(5'-phosphoribosyl)-anthranilate (PRA). The polypeptide is Anthranilate phosphoribosyltransferase (Flavobacterium psychrophilum (strain ATCC 49511 / DSM 21280 / CIP 103535 / JIP02/86)).